Consider the following 170-residue polypeptide: Ribosome maturation factor RimM (170 aa).

The PRC barrel domain occupies 98-170 (EGQYYWADLE…RIELDWDPDF (73 aa)).

This sequence belongs to the RimM family. Binds ribosomal protein uS19.

The protein localises to the cytoplasm. Its function is as follows. An accessory protein needed during the final step in the assembly of 30S ribosomal subunit, possibly for assembly of the head region. Essential for efficient processing of 16S rRNA. May be needed both before and after RbfA during the maturation of 16S rRNA. It has affinity for free ribosomal 30S subunits but not for 70S ribosomes. The protein is Ribosome maturation factor RimM of Alkalilimnicola ehrlichii (strain ATCC BAA-1101 / DSM 17681 / MLHE-1).